Here is a 287-residue protein sequence, read N- to C-terminus: Elongation factor Ts (287 aa).

Residues 80–83 (TDFL) form an involved in Mg(2+) ion dislocation from EF-Tu region.

Belongs to the EF-Ts family.

Its subcellular location is the cytoplasm. Functionally, associates with the EF-Tu.GDP complex and induces the exchange of GDP to GTP. It remains bound to the aminoacyl-tRNA.EF-Tu.GTP complex up to the GTP hydrolysis stage on the ribosome. This Pseudomonas putida (strain ATCC 47054 / DSM 6125 / CFBP 8728 / NCIMB 11950 / KT2440) protein is Elongation factor Ts.